The following is a 301-amino-acid chain: Protein FdhE homolog (301 aa).

It belongs to the FdhE family.

It is found in the cytoplasm. In terms of biological role, necessary for formate dehydrogenase activity. This Shewanella baltica (strain OS223) protein is Protein FdhE homolog.